A 215-amino-acid chain; its full sequence is Pyridoxine/pyridoxamine 5'-phosphate oxidase (215 aa).

Substrate is bound by residues 9 to 12 (RRDY) and Lys69. Residues 64–69 (RILLLK), 79–80 (FT), Lys86, and Gln108 each bind FMN. Positions 126, 130, and 134 each coordinate substrate. Residues 143-144 (QS) and Trp188 contribute to the FMN site. Position 194–196 (194–196 (RLH)) interacts with substrate. Arg198 provides a ligand contact to FMN.

It belongs to the pyridoxamine 5'-phosphate oxidase family. As to quaternary structure, homodimer. Requires FMN as cofactor.

The catalysed reaction is pyridoxamine 5'-phosphate + O2 + H2O = pyridoxal 5'-phosphate + H2O2 + NH4(+). It carries out the reaction pyridoxine 5'-phosphate + O2 = pyridoxal 5'-phosphate + H2O2. It functions in the pathway cofactor metabolism; pyridoxal 5'-phosphate salvage; pyridoxal 5'-phosphate from pyridoxamine 5'-phosphate: step 1/1. It participates in cofactor metabolism; pyridoxal 5'-phosphate salvage; pyridoxal 5'-phosphate from pyridoxine 5'-phosphate: step 1/1. Functionally, catalyzes the oxidation of either pyridoxine 5'-phosphate (PNP) or pyridoxamine 5'-phosphate (PMP) into pyridoxal 5'-phosphate (PLP). In Pseudomonas fluorescens (strain ATCC BAA-477 / NRRL B-23932 / Pf-5), this protein is Pyridoxine/pyridoxamine 5'-phosphate oxidase.